The chain runs to 104 residues: NADH-quinone oxidoreductase subunit K (104 aa).

3 consecutive transmembrane segments (helical) span residues 7-27, 33-53, and 67-87; these read LSHY…GIFL, IVIL…LVSF, and LLVL…LVVF.

It belongs to the complex I subunit 4L family. NDH-1 is composed of 14 different subunits. Subunits NuoA, H, J, K, L, M, N constitute the membrane sector of the complex.

The protein localises to the cell inner membrane. The enzyme catalyses a quinone + NADH + 5 H(+)(in) = a quinol + NAD(+) + 4 H(+)(out). NDH-1 shuttles electrons from NADH, via FMN and iron-sulfur (Fe-S) centers, to quinones in the respiratory chain. The immediate electron acceptor for the enzyme in this species is believed to be ubiquinone. Couples the redox reaction to proton translocation (for every two electrons transferred, four hydrogen ions are translocated across the cytoplasmic membrane), and thus conserves the redox energy in a proton gradient. This Xanthobacter autotrophicus (strain ATCC BAA-1158 / Py2) protein is NADH-quinone oxidoreductase subunit K.